The chain runs to 248 residues: Carbohydrate deacetylase (248 aa).

The Mg(2+) site is built by histidine 59 and histidine 121.

The protein belongs to the YdjC deacetylase family. Mg(2+) is required as a cofactor.

In terms of biological role, probably catalyzes the deacetylation of acetylated carbohydrates an important step in the degradation of oligosaccharides. The chain is Carbohydrate deacetylase from Brevibacillus brevis (strain 47 / JCM 6285 / NBRC 100599).